The primary structure comprises 227 residues: Cytochrome c oxidase subunit 2 (227 aa).

The Mitochondrial intermembrane segment spans residues 1–14 (MAYPHQLGFQDATS). The chain crosses the membrane as a helical span at residues 15–45 (PIMEELLSFHDHTLMIVFLISSLVLYLISLM). Over 46-59 (LTTKLTHTSTMDAQ) the chain is Mitochondrial matrix. The chain crosses the membrane as a helical span at residues 60–87 (EVETVWTILPAIILIMIALPSLRILYMM). The Mitochondrial intermembrane portion of the chain corresponds to 88 to 227 (DEINNPLLTV…SFENWTTSMT (140 aa)). 6 residues coordinate Cu cation: H161, C196, E198, C200, H204, and M207. E198 serves as a coordination point for Mg(2+).

This sequence belongs to the cytochrome c oxidase subunit 2 family. Component of the cytochrome c oxidase (complex IV, CIV), a multisubunit enzyme composed of 14 subunits. The complex is composed of a catalytic core of 3 subunits MT-CO1, MT-CO2 and MT-CO3, encoded in the mitochondrial DNA, and 11 supernumerary subunits COX4I, COX5A, COX5B, COX6A, COX6B, COX6C, COX7A, COX7B, COX7C, COX8 and NDUFA4, which are encoded in the nuclear genome. The complex exists as a monomer or a dimer and forms supercomplexes (SCs) in the inner mitochondrial membrane with NADH-ubiquinone oxidoreductase (complex I, CI) and ubiquinol-cytochrome c oxidoreductase (cytochrome b-c1 complex, complex III, CIII), resulting in different assemblies (supercomplex SCI(1)III(2)IV(1) and megacomplex MCI(2)III(2)IV(2)). Found in a complex with TMEM177, COA6, COX18, COX20, SCO1 and SCO2. Interacts with TMEM177 in a COX20-dependent manner. Interacts with COX20. Interacts with COX16. The cofactor is Cu cation.

The protein localises to the mitochondrion inner membrane. It catalyses the reaction 4 Fe(II)-[cytochrome c] + O2 + 8 H(+)(in) = 4 Fe(III)-[cytochrome c] + 2 H2O + 4 H(+)(out). Component of the cytochrome c oxidase, the last enzyme in the mitochondrial electron transport chain which drives oxidative phosphorylation. The respiratory chain contains 3 multisubunit complexes succinate dehydrogenase (complex II, CII), ubiquinol-cytochrome c oxidoreductase (cytochrome b-c1 complex, complex III, CIII) and cytochrome c oxidase (complex IV, CIV), that cooperate to transfer electrons derived from NADH and succinate to molecular oxygen, creating an electrochemical gradient over the inner membrane that drives transmembrane transport and the ATP synthase. Cytochrome c oxidase is the component of the respiratory chain that catalyzes the reduction of oxygen to water. Electrons originating from reduced cytochrome c in the intermembrane space (IMS) are transferred via the dinuclear copper A center (CU(A)) of subunit 2 and heme A of subunit 1 to the active site in subunit 1, a binuclear center (BNC) formed by heme A3 and copper B (CU(B)). The BNC reduces molecular oxygen to 2 water molecules using 4 electrons from cytochrome c in the IMS and 4 protons from the mitochondrial matrix. This chain is Cytochrome c oxidase subunit 2 (MT-CO2), found in Georychus capensis (Cape mole rat).